Here is a 445-residue protein sequence, read N- to C-terminus: Protein trichome berefringence-like 7 (445 aa).

Residues 69–89 (IIAGTIVSFLVIIAGGYLYVV) traverse the membrane as a helical; Signal-anchor for type II membrane protein segment. A GDS motif motif is present at residues 188–190 (GDS). Residues 418–432 (DCSHWCLPGVPDIWN) carry the DCXHWCLPGXXDXWN motif motif.

It belongs to the PC-esterase family. TBL subfamily.

It is found in the membrane. Its function is as follows. May act as a bridging protein that binds pectin and other cell wall polysaccharides. Probably involved in maintaining esterification of pectins. May be involved in the specific O-acetylation of cell wall polymers. The chain is Protein trichome berefringence-like 7 (TBL7) from Arabidopsis thaliana (Mouse-ear cress).